The sequence spans 342 residues: Leucine-rich repeat-containing protein 23 (342 aa).

Residues 1 to 30 (MSDEDDLEDFETDQDDLEREDDEKETEEWE) show a composition bias toward acidic residues. A disordered region spans residues 1 to 42 (MSDEDDLEDFETDQDDLEREDDEKETEEWEDYRKEGEESEDW). The stretch at 3 to 27 (DEDDLEDFETDQDDLEREDDEKETE) forms a coiled coil. LRR repeat units follow at residues 91–112 (HLRY…NHLT), 113–133 (NLLW…NELP), 134–154 (YLQI…ISHP), 155–176 (RLAS…DPQK), 179–199 (SLHT…INLP), 200–221 (KLKN…ENLS), 222–243 (NLTT…SKEM), and 245–266 (SLQY…AKLR). The interaction with RSPH9 stretch occupies residues 207–342 (AQNMLKKVEG…PESELDQSST (136 aa)). An LRRCT domain is found at 279-317 (NPCTDENDYRQEALVQIAHLERLDKEFYEEEERAEADEI). Positions 306-332 (YEEEERAEADEIRQRMKEEQEQEAEVE) form a coiled coil. The interval 307–342 (EEEERAEADEIRQRMKEEQEQEAEVEPESELDQSST) is disordered. Over residues 314–324 (ADEIRQRMKEE) the composition is skewed to basic and acidic residues. Acidic residues predominate over residues 325 to 342 (QEQEAEVEPESELDQSST).

In terms of assembly, component of the axonemal radial spoke complex. Interacts with RSPH3. Interacts with RSPH9.

It is found in the cytoplasm. It localises to the cytoskeleton. Its subcellular location is the flagellum axoneme. Its function is as follows. Essential for sperm motility and male fertility. Plays an important role in the proper assembly of the third radial spoke (RS3) head and the bridge structure between RS2 and RS3 in the sperm flagella. The sequence is that of Leucine-rich repeat-containing protein 23 (LRRC23) from Bos taurus (Bovine).